Here is a 128-residue protein sequence, read N- to C-terminus: Aspartate 1-decarboxylase (128 aa).

Serine 25 (schiff-base intermediate with substrate; via pyruvic acid) is an active-site residue. Serine 25 bears the Pyruvic acid (Ser) mark. Threonine 57 contributes to the substrate binding site. Residue tyrosine 58 is the Proton donor of the active site. Substrate is bound at residue 73 to 75 (GAA).

The protein belongs to the PanD family. In terms of assembly, heterooctamer of four alpha and four beta subunits. Requires pyruvate as cofactor. Is synthesized initially as an inactive proenzyme, which is activated by self-cleavage at a specific serine bond to produce a beta-subunit with a hydroxyl group at its C-terminus and an alpha-subunit with a pyruvoyl group at its N-terminus.

It localises to the cytoplasm. The enzyme catalyses L-aspartate + H(+) = beta-alanine + CO2. Its pathway is cofactor biosynthesis; (R)-pantothenate biosynthesis; beta-alanine from L-aspartate: step 1/1. Catalyzes the pyruvoyl-dependent decarboxylation of aspartate to produce beta-alanine. This chain is Aspartate 1-decarboxylase, found in Chlorobaculum parvum (strain DSM 263 / NCIMB 8327) (Chlorobium vibrioforme subsp. thiosulfatophilum).